The following is a 309-amino-acid chain: NAD kinase (309 aa).

D89 acts as the Proton acceptor in catalysis. NAD(+) contacts are provided by residues 89 to 90 (DG), 163 to 164 (NE), H174, R191, D193, and 204 to 209 (TAYALS).

The protein belongs to the NAD kinase family. Requires a divalent metal cation as cofactor.

The protein resides in the cytoplasm. The enzyme catalyses NAD(+) + ATP = ADP + NADP(+) + H(+). Involved in the regulation of the intracellular balance of NAD and NADP, and is a key enzyme in the biosynthesis of NADP. Catalyzes specifically the phosphorylation on 2'-hydroxyl of the adenosine moiety of NAD to yield NADP. The chain is NAD kinase from Shewanella sp. (strain ANA-3).